A 273-amino-acid chain; its full sequence is MKLIENWFSERYSDNLQLSFRVSDQLLSIKTDYQRIDLFDTYDFGKLLAIDGTVQLTERDEFIYHELITMVPYHLTPRPPENALIIGGGDGGAARRLIDLGLKHIVNVEIDDQVVEVSKRFFPSLSSAFNDSHVKLLIQDGIKYVKNTSEKFDLIIIDSTDPEGPAEGLFSKDFYNDTRKIMNEGAVIVSQSGSPFYQPKAIKLAYSGMREVFSDVRVYTGFIPTYPSGFWSFTVASPWTMKPRPVNMSGKYFNADVMEGSFRLPQFVKELIT.

The 234-residue stretch at 5–238 (ENWFSERYSD…GFWSFTVASP (234 aa)) folds into the PABS domain. Gln34 serves as a coordination point for S-methyl-5'-thioadenosine. The spermidine site is built by His65 and Asp90. S-methyl-5'-thioadenosine is bound by residues Glu109 and 140-141 (DG). Catalysis depends on Asp158, which acts as the Proton acceptor. 158–161 (DSTD) serves as a coordination point for spermidine. Position 165 (Pro165) interacts with S-methyl-5'-thioadenosine.

The protein belongs to the spermidine/spermine synthase family. As to quaternary structure, homodimer or homotetramer.

The protein resides in the cytoplasm. The catalysed reaction is S-adenosyl 3-(methylsulfanyl)propylamine + putrescine = S-methyl-5'-thioadenosine + spermidine + H(+). Its pathway is amine and polyamine biosynthesis; spermidine biosynthesis; spermidine from putrescine: step 1/1. Its function is as follows. Catalyzes the irreversible transfer of a propylamine group from the amino donor S-adenosylmethioninamine (decarboxy-AdoMet) to putrescine (1,4-diaminobutane) to yield spermidine. The chain is Polyamine aminopropyltransferase from Thermoplasma acidophilum (strain ATCC 25905 / DSM 1728 / JCM 9062 / NBRC 15155 / AMRC-C165).